We begin with the raw amino-acid sequence, 162 residues long: MSDLILGIGEYGVSKTPGSMVKTYALGSCVAVTMYEPNLKIAGMVHVALPESKLNTAKGEQCPGYFADLGVPLLFKEMVRLGCHARGRGLVVKMLGGAAVMAGNDTFNIGKRNILAVKKILWKLGMGPVAEDVGANYSRTVSLHVDTGLVNVSCPGRGQWQI.

The protein belongs to the CheD family.

The catalysed reaction is L-glutaminyl-[protein] + H2O = L-glutamyl-[protein] + NH4(+). Probably deamidates glutamine residues to glutamate on methyl-accepting chemotaxis receptors (MCPs), playing an important role in chemotaxis. The sequence is that of Probable chemoreceptor glutamine deamidase CheD from Syntrophotalea carbinolica (strain DSM 2380 / NBRC 103641 / GraBd1) (Pelobacter carbinolicus).